A 325-amino-acid polypeptide reads, in one-letter code: MSETATWQPSASIPNLLKRAAIMAEIRRFFADRGVLEVETPCMSQATVTDIHLFPFETRFVGPGHSQGINLYLMTSPEYHMKRLLAAGCGPVFQLCRSFRNEEMGRHHNPEFTMLEWYRPHYDMYRLMNEVDDLLQQVLDCQPAESLSYQQAFLRHLEIDPLSADKTQLREAAAKLDLSNIADTEEDRDTLLQLLFTMGVEPHIGKEKPTFIYHFPASQASLAQISTEDHRVAERFEVYYKGIELANGFHELTDAREQQQRFEQDNRKRAARGLPQQPIDQNLLDALAAGLPDCSGVALGVDRLVMLALGAESLADVIAFTVDRA.

76-78 (SPE) serves as a coordination point for substrate. Residues 100-102 (RNE) and asparagine 109 contribute to the ATP site. Tyrosine 118 is a binding site for substrate. 244-245 (EL) provides a ligand contact to ATP. Glutamate 251 is a substrate binding site. Glycine 300 provides a ligand contact to ATP.

This sequence belongs to the class-II aminoacyl-tRNA synthetase family. EpmA subfamily. Homodimer.

The catalysed reaction is D-beta-lysine + L-lysyl-[protein] + ATP = N(6)-((3R)-3,6-diaminohexanoyl)-L-lysyl-[protein] + AMP + diphosphate + H(+). Its function is as follows. With EpmB is involved in the beta-lysylation step of the post-translational modification of translation elongation factor P (EF-P) on 'Lys-34'. Catalyzes the ATP-dependent activation of (R)-beta-lysine produced by EpmB, forming a lysyl-adenylate, from which the beta-lysyl moiety is then transferred to the epsilon-amino group of EF-P 'Lys-34'. The sequence is that of Elongation factor P--(R)-beta-lysine ligase from Salmonella typhi.